The primary structure comprises 88 residues: Small ribosomal subunit protein bS20 (88 aa).

The segment at 1 to 26 is disordered; the sequence is MANTAQARKRARQNTKRRQNSASQRS. Basic residues predominate over residues 7-19; that stretch reads ARKRARQNTKRRQ.

The protein belongs to the bacterial ribosomal protein bS20 family.

In terms of biological role, binds directly to 16S ribosomal RNA. The sequence is that of Small ribosomal subunit protein bS20 from Psychrobacter arcticus (strain DSM 17307 / VKM B-2377 / 273-4).